Consider the following 494-residue polypeptide: Guanosine-5'-triphosphate,3'-diphosphate pyrophosphatase (494 aa).

It belongs to the GppA/Ppx family. GppA subfamily.

It carries out the reaction guanosine 3'-diphosphate 5'-triphosphate + H2O = guanosine 3',5'-bis(diphosphate) + phosphate + H(+). It functions in the pathway purine metabolism; ppGpp biosynthesis; ppGpp from GTP: step 2/2. Catalyzes the conversion of pppGpp to ppGpp. Guanosine pentaphosphate (pppGpp) is a cytoplasmic signaling molecule which together with ppGpp controls the 'stringent response', an adaptive process that allows bacteria to respond to amino acid starvation, resulting in the coordinated regulation of numerous cellular activities. This Escherichia fergusonii (strain ATCC 35469 / DSM 13698 / CCUG 18766 / IAM 14443 / JCM 21226 / LMG 7866 / NBRC 102419 / NCTC 12128 / CDC 0568-73) protein is Guanosine-5'-triphosphate,3'-diphosphate pyrophosphatase.